A 995-amino-acid chain; its full sequence is DExH-box ATP-dependent RNA helicase DExH1 (995 aa).

2 disordered regions span residues 1 to 42 and 156 to 192; these read MPPH…EQRW and KTTQ…ASKL. Residues 25–37 show a composition bias toward gly residues; the sequence is RGGGGRGGGGGGR. Over residues 161-170 the composition is skewed to low complexity; it reads SGSSGASASA. The span at 171-181 shows a compositional bias: polar residues; sequence FNDQQDRTSTL. Positions 238–405 constitute a Helicase ATP-binding domain; sequence LNSVSQNQVL…FGNSPTMHIP (168 aa). 251–258 contacts ATP; it reads GETGCGKT. The DEIH box signature appears at 352 to 355; the sequence is DEIH. Residues 429 to 450 form a disordered region; it reads SSDSGNYQGSSRGRRRESESKK. The 180-residue stretch at 484-663 folds into the Helicase C-terminal domain; it reads QIDVDLVEAT…ELCLHIKSLQ (180 aa).

This sequence belongs to the DExH box helicase family.

The enzyme catalyses ATP + H2O = ADP + phosphate + H(+). The protein is DExH-box ATP-dependent RNA helicase DExH1 of Arabidopsis thaliana (Mouse-ear cress).